The sequence spans 42 residues: Beta-defensin 13 (42 aa).

Disulfide bonds link cysteine 9-cysteine 38, cysteine 16-cysteine 31, and cysteine 21-cysteine 39.

Belongs to the beta-defensin family. As to expression, neutrophilic granules.

Its subcellular location is the secreted. In terms of biological role, has bactericidal activity. Active against E.coli ML35 and S.aureus 502A. The chain is Beta-defensin 13 (DEFB13) from Bos taurus (Bovine).